A 144-amino-acid polypeptide reads, in one-letter code: MIALIQRVSQAKVNVKGETIGKIGKGLLVLLGVEKEDNREKADKLAEKVLNYRIFSDENDKMNLNVQQAQGELLIVSQFTLAADTQKGLRPSFSKGAPPALANELYEYFIQKCAEKLPVSTGQFAADMQVSLTNDGPVTFWLNV.

A Gly-cisPro motif, important for rejection of L-amino acids motif is present at residues 136 to 137; sequence GP.

It belongs to the DTD family. Homodimer.

The protein localises to the cytoplasm. It catalyses the reaction glycyl-tRNA(Ala) + H2O = tRNA(Ala) + glycine + H(+). The catalysed reaction is a D-aminoacyl-tRNA + H2O = a tRNA + a D-alpha-amino acid + H(+). Its function is as follows. An aminoacyl-tRNA editing enzyme that deacylates mischarged D-aminoacyl-tRNAs. Also deacylates mischarged glycyl-tRNA(Ala), protecting cells against glycine mischarging by AlaRS. Acts via tRNA-based rather than protein-based catalysis; rejects L-amino acids rather than detecting D-amino acids in the active site. By recycling D-aminoacyl-tRNA to D-amino acids and free tRNA molecules, this enzyme counteracts the toxicity associated with the formation of D-aminoacyl-tRNA entities in vivo and helps enforce protein L-homochirality. The chain is D-aminoacyl-tRNA deacylase from Haemophilus influenzae (strain PittGG).